Consider the following 234-residue polypeptide: Protein SSP120 (234 aa).

A signal peptide spans 1-22 (MRFLRGFVFSLAFTLYKVTATA). 2 EF-hand domains span residues 52 to 87 (LKDYTPETFFALHDIKKKGFLDENDILSLYGLNREE) and 108 to 143 (MAKRVVSLIMRLLDVDDNTKITKEEYLQFAKRGNKF). At Thr212 the chain carries Phosphothreonine.

The protein is Protein SSP120 (SSP120) of Saccharomyces cerevisiae (strain ATCC 204508 / S288c) (Baker's yeast).